A 553-amino-acid polypeptide reads, in one-letter code: Thioredoxin domain-containing protein 2 (553 aa).

2 disordered regions span residues 1–37 (MDVDKELGMESVKAGASGKPEMRLGTQEETSEGDANE) and 77–442 (TEES…EETM). Residues 99–143 (PKQDDSPKSSEETIQPKEGDIPKAPEETIQSKKEDLPKSSEKAIQ) show a composition bias toward basic and acidic residues. 22 repeat units span residues 113–127 (QPKEGDIPKAPEETI), 128–142 (QSKKEDLPKSSEKAI), 143–157 (QPKESNIPKSSAKPI), 158–172 (QPKLGNIPKASVKPS), 173–187 (QPKEGDIPKAPEETI), 188–202 (QSKKEDLPKSSEEAI), 203–217 (QPKEGDIPKSSAKPI), 218–232 (QPKLGNIAKTSVKPS), 233–247 (QPKESDIPKSPEETI), 248–262 (QPKEGDIPKSSAKPI), 263–277 (QPKLGNIPKASVKPS), 278–292 (QPKEGDISKSPEEAI), 293–307 (QPKEGDLPKSLEEAI), 308–322 (QPKEGDIPKSPEEAI), 323–337 (QPKEGDIPKSLEEAI), 338–352 (QPKEGDIPKSPEETI), 353–367 (QPKKGDIPKSPEEAI), 368–382 (QPKEGDIPKSPKQAI), 383–397 (QPKEGDIPKSLEEAI), 398–412 (PPKEIDIPKSPEETI), 413–427 (QPKEDDSPKSLEEAT), and 428–442 (PSKEGDILKPEEETM). Positions 113–442 (QPKEGDIPKA…DILKPEEETM (330 aa)) are 22 X 15 AA approximate tandem repeat of Q-P-K-X-G-D-I-P-K-S-[PS]-E-[KE]-X-I. Residues 173–209 (QPKEGDIPKAPEETIQSKKEDLPKSSEEAIQPKEGDI) show a composition bias toward basic and acidic residues. Residues 233–254 (QPKESDIPKSPEETIQPKEGDI) are compositionally biased toward basic and acidic residues. Basic and acidic residues-rich tracts occupy residues 278–376 (QPKE…DIPK) and 385–439 (KEGD…KPEE). Position 362 is a phosphoserine (Ser-362). Position 392 is a phosphoserine (Ser-392). Positions 429–553 (SKEGDILKPE…KLEAVIAELK (125 aa)) constitute a Thioredoxin domain. Cysteines 480 and 483 form a disulfide.

Testis-specific. Only expressed during spermiogenesis, prominently in round and elongating spermatids.

The protein resides in the cytoplasm. In terms of biological role, probably plays a regulatory role in sperm development. May participate in regulation of fibrous sheath (FS) assembly by supporting the formation of disulfide bonds during sperm tail morphogenesis. May also be required to rectify incorrect disulfide pairing and generate suitable pairs between the FS constituents. Can reduce disulfide bonds in vitro in the presence of NADP and thioredoxin reductase. The polypeptide is Thioredoxin domain-containing protein 2 (TXNDC2) (Homo sapiens (Human)).